The chain runs to 113 residues: Dolichyl-diphosphooligosaccharide--protein glycosyltransferase subunit DAD1 (113 aa).

The Cytoplasmic segment spans residues 1–30; that stretch reads MGSSAFEVLTFFLKDYKANTPQKLKIIDAY. Residues 31-51 traverse the membrane as a helical segment; it reads LLYILLTGINQFLYCCLVGTF. Pro-52 is a topological domain (lumenal). A helical membrane pass occupies residues 53 to 73; it reads FNSFLSGFISCVASFVLGVCL. Topologically, residues 74–92 are cytoplasmic; that stretch reads RLQVNPQNSSNFCGIPPER. The chain crosses the membrane as a helical span at residues 93–113; sequence AFADFIFAHVVLHLVVMNFIG.

Belongs to the DAD/OST2 family. Component of the oligosaccharyltransferase (OST) complex. As to expression, widely expressed. Greatest expression seen in the epidermis, intermediate expression in the fat body and midgut and mild expression observed in the silk gland.

It localises to the endoplasmic reticulum membrane. It participates in protein modification; protein glycosylation. Its function is as follows. Subunit of the oligosaccharyl transferase (OST) complex that catalyzes the initial transfer of a defined glycan (Glc(3)Man(9)GlcNAc(2) in eukaryotes) from the lipid carrier dolichol-pyrophosphate to an asparagine residue within an Asn-X-Ser/Thr consensus motif in nascent polypeptide chains, the first step in protein N-glycosylation. N-glycosylation occurs cotranslationally and the complex associates with the Sec61 complex at the channel-forming translocon complex that mediates protein translocation across the endoplasmic reticulum (ER). All subunits are required for a maximal enzyme activity. The chain is Dolichyl-diphosphooligosaccharide--protein glycosyltransferase subunit DAD1 from Araneus ventricosus (Orbweaver spider).